The following is a 249-amino-acid chain: General transcription factor IIF subunit 2 (249 aa).

An N-acetylalanine modification is found at A2. 3 positions are modified to N6-acetyllysine: K22, K33, and K137. At S142 the chain carries Phosphoserine. The DNA site is built by G227 and H229. Phosphoserine is present on S248.

This sequence belongs to the TFIIF beta subunit family. Heterodimer of an alpha and a beta subunit. Interacts with HTATSF1 and URI1. Interacts with GPBP1. Interacts with GTF2B (via N-terminus); this interaction is inhibited in presence of GTF2F1. Part of TBP-based Pol II pre-initiation complex (PIC), in which Pol II core assembles with general transcription factors and other specific initiation factors including GTF2E1, GTF2E2, GTF2F1, GTF2F2, TCEA1, ERCC2, ERCC3, GTF2H2, GTF2H3, GTF2H4, GTF2H5, GTF2A1, GTF2A2, GTF2B and TBP; this large multi-subunit PIC complex mediates DNA unwinding and targets Pol II core to the transcription start site where the first phosphodiester bond forms.

Its subcellular location is the nucleus. In terms of biological role, TFIIF is a general transcription initiation factor that binds to RNA polymerase II and helps to recruit it to the initiation complex in collaboration with TFIIB. The protein is General transcription factor IIF subunit 2 (Gtf2f2) of Mus musculus (Mouse).